The following is a 200-amino-acid chain: Urease accessory protein UreE (200 aa).

The tract at residues 171-200 is disordered; that stretch reads HHGHAHPHPHDHDHQHGPGCAHGRHGHDHH.

The protein belongs to the UreE family.

The protein localises to the cytoplasm. Functionally, involved in urease metallocenter assembly. Binds nickel. Probably functions as a nickel donor during metallocenter assembly. This chain is Urease accessory protein UreE, found in Burkholderia vietnamiensis (strain G4 / LMG 22486) (Burkholderia cepacia (strain R1808)).